Reading from the N-terminus, the 627-residue chain is BURP domain-containing protein 12 (627 aa).

The first 25 residues, 1–25 (MASPPHLPLLLLLLVVVCNAAGGDG), serve as a signal peptide directing secretion. N-linked (GlcNAc...) asparagine glycosylation is found at N119, N175, N251, N366, N384, and N530. In terms of domain architecture, BURP spans 415 to 626 (FFRETELVSG…FEGDMTWTVA (212 aa)).

Expressed in stems, leaves, shoot and panicles.

This is BURP domain-containing protein 12 (BURP12) from Oryza sativa subsp. japonica (Rice).